We begin with the raw amino-acid sequence, 533 residues long: D-3-phosphoglycerate dehydrogenase (533 aa).

Ala2 bears the N-acetylalanine mark. The residue at position 14 (Ser14) is a Phosphoserine. An N6-acetyllysine modification is found at Lys58. Residues Thr78, 155-156 (RI), Asp175, Thr207, 234-236 (CAR), and Asp260 contribute to the NAD(+) site. Position 78 is a phosphothreonine (Thr78). Residue Arg236 is part of the active site. The active site involves Glu265. His283 functions as the Proton donor in the catalytic mechanism. 283 to 286 (HLGA) serves as a coordination point for NAD(+).

Belongs to the D-isomer specific 2-hydroxyacid dehydrogenase family. Homotetramer.

The enzyme catalyses (2R)-3-phosphoglycerate + NAD(+) = 3-phosphooxypyruvate + NADH + H(+). The catalysed reaction is (R)-2-hydroxyglutarate + NAD(+) = 2-oxoglutarate + NADH + H(+). It carries out the reaction (S)-malate + NAD(+) = oxaloacetate + NADH + H(+). It participates in amino-acid biosynthesis; L-serine biosynthesis; L-serine from 3-phospho-D-glycerate: step 1/3. Catalyzes the reversible oxidation of 3-phospho-D-glycerate to 3-phosphonooxypyruvate, the first step of the phosphorylated L-serine biosynthesis pathway. Also catalyzes the reversible oxidation of 2-hydroxyglutarate to 2-oxoglutarate and the reversible oxidation of (S)-malate to oxaloacetate. The sequence is that of D-3-phosphoglycerate dehydrogenase (PHGDH) from Sus scrofa (Pig).